The chain runs to 616 residues: Dihydroxy-acid dehydratase (616 aa).

Asp81 is a Mg(2+) binding site. Residue Cys122 coordinates [2Fe-2S] cluster. Residues Asp123 and Lys124 each contribute to the Mg(2+) site. An N6-carboxylysine modification is found at Lys124. Cys197 contacts [2Fe-2S] cluster. Residue Glu493 coordinates Mg(2+). Ser519 serves as the catalytic Proton acceptor.

The protein belongs to the IlvD/Edd family. As to quaternary structure, homodimer. It depends on [2Fe-2S] cluster as a cofactor. Requires Mg(2+) as cofactor.

The enzyme catalyses (2R)-2,3-dihydroxy-3-methylbutanoate = 3-methyl-2-oxobutanoate + H2O. The catalysed reaction is (2R,3R)-2,3-dihydroxy-3-methylpentanoate = (S)-3-methyl-2-oxopentanoate + H2O. The protein operates within amino-acid biosynthesis; L-isoleucine biosynthesis; L-isoleucine from 2-oxobutanoate: step 3/4. Its pathway is amino-acid biosynthesis; L-valine biosynthesis; L-valine from pyruvate: step 3/4. Its function is as follows. Functions in the biosynthesis of branched-chain amino acids. Catalyzes the dehydration of (2R,3R)-2,3-dihydroxy-3-methylpentanoate (2,3-dihydroxy-3-methylvalerate) into 2-oxo-3-methylpentanoate (2-oxo-3-methylvalerate) and of (2R)-2,3-dihydroxy-3-methylbutanoate (2,3-dihydroxyisovalerate) into 2-oxo-3-methylbutanoate (2-oxoisovalerate), the penultimate precursor to L-isoleucine and L-valine, respectively. This chain is Dihydroxy-acid dehydratase, found in Corynebacterium kroppenstedtii (strain DSM 44385 / JCM 11950 / CIP 105744 / CCUG 35717).